The primary structure comprises 469 residues: Glutamate--tRNA ligase (469 aa).

The 'HIGH' region signature appears at proline 9–glycine 19. Positions lysine 236–arginine 240 match the 'KMSKS' region motif. Lysine 239 contacts ATP.

The protein belongs to the class-I aminoacyl-tRNA synthetase family. Glutamate--tRNA ligase type 1 subfamily. As to quaternary structure, monomer.

The protein localises to the cytoplasm. The enzyme catalyses tRNA(Glu) + L-glutamate + ATP = L-glutamyl-tRNA(Glu) + AMP + diphosphate. Its function is as follows. Catalyzes the attachment of glutamate to tRNA(Glu) in a two-step reaction: glutamate is first activated by ATP to form Glu-AMP and then transferred to the acceptor end of tRNA(Glu). In Shewanella amazonensis (strain ATCC BAA-1098 / SB2B), this protein is Glutamate--tRNA ligase.